The chain runs to 369 residues: Biglycan (369 aa).

A signal peptide spans 1–16; it reads MCPLWLLTLLLALSQA. Residues 17-37 constitute a propeptide that is removed on maturation; sequence LPFEQKGFWDFTLDDGLLMMN. Residues Ser-42 and Ser-48 are each glycosylated (O-linked (Xyl...) (glycosaminoglycan) serine). 2 disulfide bridges follow: Cys-64–Cys-70 and Cys-68–Cys-77. LRR repeat units follow at residues 83 to 103, 104 to 127, 128 to 151, 152 to 172, 173 to 196, 197 to 221, 222 to 242, 243 to 266, 267 to 290, 291 to 313, 314 to 343, and 344 to 369; these read KTVP…NNDI, SELR…NNKI, SKIH…KNHL, VEIP…DNRI, RKVP…GNPL, ENSG…EAKL, TGIP…HNKI, QAIE…HNQI, RMIE…NNKL, SRVP…SNNI, TKVG…NNPV, and PYWE…NYKK. N-linked (GlcNAc...) asparagine glycans are attached at residues Asn-271 and Asn-312. A disulfide bond links Cys-322 and Cys-355.

The protein belongs to the small leucine-rich proteoglycan (SLRP) family. SLRP class I subfamily. In terms of processing, the two attached glycosaminoglycan chains can be either chondroitin sulfate or dermatan sulfate. In terms of tissue distribution, found in several connective tissues, especially in articular cartilages.

It is found in the secreted. Its subcellular location is the extracellular space. The protein localises to the extracellular matrix. May be involved in collagen fiber assembly. This Mus musculus (Mouse) protein is Biglycan (Bgn).